Reading from the N-terminus, the 588-residue chain is MFS siderochrome iron transporter 1 (588 aa).

Helical transmembrane passes span Gln-60–Val-80, Leu-104–Ala-124, Pro-133–Cys-153, Ala-161–Ile-181, Ala-191–Leu-211, Tyr-225–Trp-245, Ile-278–Tyr-298, Ser-307–Tyr-327, Leu-348–Phe-368, Tyr-385–Val-405, Trp-413–Phe-433, Ile-440–Thr-460, and Tyr-473–Val-495. Asn-519 carries N-linked (GlcNAc...) asparagine glycosylation. The helical transmembrane segment at Lys-552–Trp-572 threads the bilayer.

It belongs to the major facilitator superfamily.

It localises to the membrane. In terms of biological role, major facilitator transporter involved in siderophore transport. The polypeptide is MFS siderochrome iron transporter 1 (Ajellomyces capsulatus (Darling's disease fungus)).